We begin with the raw amino-acid sequence, 187 residues long: Elongation factor P (187 aa).

Belongs to the elongation factor P family.

Its subcellular location is the cytoplasm. It participates in protein biosynthesis; polypeptide chain elongation. Involved in peptide bond synthesis. Stimulates efficient translation and peptide-bond synthesis on native or reconstituted 70S ribosomes in vitro. Probably functions indirectly by altering the affinity of the ribosome for aminoacyl-tRNA, thus increasing their reactivity as acceptors for peptidyl transferase. The chain is Elongation factor P from Thermodesulfovibrio yellowstonii (strain ATCC 51303 / DSM 11347 / YP87).